Here is a 114-residue protein sequence, read N- to C-terminus: Fumarate reductase subunit D (114 aa).

The next 3 membrane-spanning stretches (helical) occupy residues 24–44 (VSAI…PFGL), 50–70 (LITF…TIFP), and 92–112 (GGFI…FAVI).

Belongs to the FrdD family. As to quaternary structure, part of an enzyme complex containing four subunits: a flavoprotein (FrdA), an iron-sulfur protein (FrdB), and two hydrophobic anchor proteins (FrdC and FrdD).

The protein resides in the cell inner membrane. Its function is as follows. Anchors the catalytic components of the fumarate reductase complex to the cell membrane, binds quinones. The protein is Fumarate reductase subunit D of Haemophilus influenzae (strain PittEE).